Consider the following 171-residue polypeptide: MTVTTIHEQLLEIITPVIRSFDLELWGMDFIQGGKAVLRIYIDGPDGVTIDQCATVSRHIGLALEVEDIIAGAYNLEVSSPGLERPLFSAAQLAAYKGHKAELVLRAPCAQFPGRKKFTGVVGNVEGENFTLQIDPLKGGDNLQEELSAHWDDVKKARLIYDFDSEKGQKR.

It belongs to the RimP family.

The protein localises to the cytoplasm. Required for maturation of 30S ribosomal subunits. The polypeptide is Ribosome maturation factor RimP (Oleidesulfovibrio alaskensis (strain ATCC BAA-1058 / DSM 17464 / G20) (Desulfovibrio alaskensis)).